Reading from the N-terminus, the 700-residue chain is Pentatricopeptide repeat-containing protein At3g26540 (700 aa).

PPR repeat units follow at residues 95–125 (PIFL…MPER), 126–160 (DGGS…GVRA), 161–195 (TETS…GYSG), 196–226 (NVDL…IVNP), 227–261 (SDVS…NVRP), 262–296 (LNHT…SVVA), 297–327 (DTVV…TRSK), 328–362 (DLKS…NIVS), 363–389 (WNAM…MRQE), 394–428 (DNVT…GYDT), 429–459 (NVIV…MSEL), 461–495 (DEVS…AKPS), 497–529 (YTLA…GYKI), 530–560 (DVVI…AATR), 561–595 (DLIL…GVKP), 596–626 (DHVT…MSTK), and 632–662 (QVEH…MPFD).

It belongs to the PPR family. PCMP-A subfamily.

The chain is Pentatricopeptide repeat-containing protein At3g26540 (PCMP-A5) from Arabidopsis thaliana (Mouse-ear cress).